The primary structure comprises 469 residues: Neuraminidase (469 aa).

At 1 to 9 (MNPNQKIIT) the chain is on the intravirion side. A helical membrane pass occupies residues 10–30 (IGSVSLTFAAICFLMQIAILV). The interval 11–33 (GSVSLTFAAICFLMQIAILVTTV) is involved in apical transport and lipid raft association. The Virion surface portion of the chain corresponds to 31 to 469 (TTVTLNFKQY…DGADINLMPI (439 aa)). The interval 36–88 (NFKQYECDPPATNQVMPCEPIIIERNITEIVYLTNTTIEREICPKLVEYRNWS) is hypervariable stalk region. Asparagine 61, asparagine 70, and asparagine 86 each carry an N-linked (GlcNAc...) asparagine; by host glycan. The tract at residues 91–469 (QCKITGFAPF…DGADINLMPI (379 aa)) is head of neuraminidase. 8 disulfide bridges follow: cysteine 92/cysteine 417, cysteine 124/cysteine 129, cysteine 183/cysteine 230, cysteine 232/cysteine 237, cysteine 278/cysteine 291, cysteine 280/cysteine 289, cysteine 318/cysteine 337, and cysteine 421/cysteine 447. Arginine 118 lines the substrate pocket. Asparagine 146 is a glycosylation site (N-linked (GlcNAc...) asparagine; by host). Aspartate 151 acts as the Proton donor/acceptor in catalysis. Substrate is bound at residue arginine 152. N-linked (GlcNAc...) asparagine; by host glycans are attached at residues asparagine 200 and asparagine 234. 276–277 (EE) is a substrate binding site. Substrate is bound at residue arginine 292. Ca(2+)-binding residues include aspartate 293 and glycine 297. The N-linked (GlcNAc...) asparagine; by host glycan is linked to asparagine 313. Position 324 (aspartate 324) interacts with Ca(2+). Substrate is bound at residue arginine 371. Asparagine 402 carries N-linked (GlcNAc...) asparagine; by host glycosylation. Residue tyrosine 406 is the Nucleophile of the active site.

This sequence belongs to the glycosyl hydrolase 34 family. As to quaternary structure, homotetramer. Ca(2+) is required as a cofactor. N-glycosylated.

It localises to the virion membrane. Its subcellular location is the host apical cell membrane. The catalysed reaction is Hydrolysis of alpha-(2-&gt;3)-, alpha-(2-&gt;6)-, alpha-(2-&gt;8)- glycosidic linkages of terminal sialic acid residues in oligosaccharides, glycoproteins, glycolipids, colominic acid and synthetic substrates.. Inhibited by the neuraminidase inhibitors zanamivir (Relenza) and oseltamivir (Tamiflu). These drugs interfere with the release of progeny virus from infected cells and are effective against all influenza strains. Resistance to neuraminidase inhibitors is quite rare. Its function is as follows. Catalyzes the removal of terminal sialic acid residues from viral and cellular glycoconjugates. Cleaves off the terminal sialic acids on the glycosylated HA during virus budding to facilitate virus release. Additionally helps virus spread through the circulation by further removing sialic acids from the cell surface. These cleavages prevent self-aggregation and ensure the efficient spread of the progeny virus from cell to cell. Otherwise, infection would be limited to one round of replication. Described as a receptor-destroying enzyme because it cleaves a terminal sialic acid from the cellular receptors. May facilitate viral invasion of the upper airways by cleaving the sialic acid moieties on the mucin of the airway epithelial cells. Likely to plays a role in the budding process through its association with lipid rafts during intracellular transport. May additionally display a raft-association independent effect on budding. Plays a role in the determination of host range restriction on replication and virulence. Sialidase activity in late endosome/lysosome traffic seems to enhance virus replication. This is Neuraminidase from Influenza A virus (strain A/Swine/Kanagawa/2/1978 H1N2).